A 515-amino-acid chain; its full sequence is Cytochrome P450 76C3 (515 aa).

The chain crosses the membrane as a helical span at residues 5–25; sequence LIQGMSLPLYFLLTLFFFFFA. Cysteine 451 is a heme binding site.

Belongs to the cytochrome P450 family. The cofactor is heme.

It is found in the membrane. This chain is Cytochrome P450 76C3 (CYP76C3), found in Arabidopsis thaliana (Mouse-ear cress).